The chain runs to 541 residues: Chaperonin GroEL 2 (541 aa).

Residues 30 to 33, K51, 87 to 91, G415, and D496 each bind ATP; these read TLGP and DGTTT.

Belongs to the chaperonin (HSP60) family. In terms of assembly, forms a cylinder of 14 subunits composed of two heptameric rings stacked back-to-back. Interacts with the co-chaperonin GroES.

Its subcellular location is the cytoplasm. The catalysed reaction is ATP + H2O + a folded polypeptide = ADP + phosphate + an unfolded polypeptide.. Functionally, together with its co-chaperonin GroES, plays an essential role in assisting protein folding. The GroEL-GroES system forms a nano-cage that allows encapsulation of the non-native substrate proteins and provides a physical environment optimized to promote and accelerate protein folding. This Bradyrhizobium sp. (strain BTAi1 / ATCC BAA-1182) protein is Chaperonin GroEL 2.